An 867-amino-acid polypeptide reads, in one-letter code: Probable alpha,alpha-trehalose-phosphate synthase [UDP-forming] 9 (867 aa).

Ser5 is modified (phosphoserine). A Phosphothreonine modification is found at Thr32. A glycosyltransferase region spans residues 59–546 (ERKIIVANML…AKSFMQDLER (488 aa)).

It in the N-terminal section; belongs to the glycosyltransferase 20 family. In the C-terminal section; belongs to the trehalose phosphatase family.

It carries out the reaction D-glucose 6-phosphate + UDP-alpha-D-glucose = alpha,alpha-trehalose 6-phosphate + UDP + H(+). The polypeptide is Probable alpha,alpha-trehalose-phosphate synthase [UDP-forming] 9 (TPS9) (Arabidopsis thaliana (Mouse-ear cress)).